We begin with the raw amino-acid sequence, 237 residues long: Ribosomal RNA small subunit methyltransferase G (237 aa).

S-adenosyl-L-methionine-binding positions include Gly78, Phe83, 129 to 130 (AE), and Arg148.

This sequence belongs to the methyltransferase superfamily. RNA methyltransferase RsmG family.

The protein resides in the cytoplasm. Specifically methylates the N7 position of a guanine in 16S rRNA. This is Ribosomal RNA small subunit methyltransferase G from Streptococcus thermophilus (strain ATCC BAA-491 / LMD-9).